We begin with the raw amino-acid sequence, 145 residues long: Cytochrome c550 (145 aa).

The signal sequence occupies residues 1–24; it reads MNKNNVLRGLLVLAGLSLSSLALA. Residues 60-142 form the Cytochrome c domain; that stretch reads LAVEIGASAY…AIRSYLESVH (83 aa). 4 residues coordinate heme c: Cys73, Cys76, His77, and Met119.

As to quaternary structure, monomer. Interacts with the quinoprotein ethanol dehydrogenase (QEDH) ExaA. In terms of processing, binds 1 heme group per subunit.

It localises to the periplasm. It participates in alcohol metabolism; ethanol degradation; acetate from ethanol. In terms of biological role, is an essential component of the ethanol oxidation system that allows P.aeruginosa to grow on ethanol as the sole carbon and energy source. Is the direct electron acceptor of the quinoprotein ethanol dehydrogenase (QEDH). The protein is Cytochrome c550 of Pseudomonas aeruginosa (strain ATCC 15692 / DSM 22644 / CIP 104116 / JCM 14847 / LMG 12228 / 1C / PRS 101 / PAO1).